The chain runs to 351 residues: CCN family member 3 (351 aa).

Residues 1–21 (MSVFLRKQCLCLGFLLLHLLN) form the signal peptide. An IGFBP N-terminal domain is found at 25–99 (ATLRCPSRCP…NNETGICMVP (75 aa)). Cystine bridges form between Cys29-Cys55, Cys33-Cys57, Cys37-Cys58, Cys44-Cys61, Cys69-Cys83, and Cys75-Cys96. Asn91 carries N-linked (GlcNAc...) asparagine glycosylation. Positions 102 to 168 (DNCVFDGVIY…GECCEKWTCG (67 aa)) constitute a VWFC domain. In terms of domain architecture, TSP type-1 spans 199–244 (NCIEQTTEWSACSKSCGMGLSTRVTNRNLQCEMVKQTRLCMVRPCE). Cys238 is lipidated: S-palmitoyl cysteine. Cystine bridges form between Cys258/Cys295, Cys275/Cys309, Cys286/Cys325, Cys289/Cys327, and Cys294/Cys331. The CTCK domain maps to 258–332 (CLRTKKSLKS…GTCTCHSNCP (75 aa)). An N-linked (GlcNAc...) asparagine glycan is attached at Asn274.

The protein belongs to the CCN family. Interacts with FBLN1. Interacts (via CTCK domain) with NOTCH1 (via the EGF-like repeat region). Interacts with GJA1/CX43. Interacts with ITGA5:ITGB1, ITGAV:ITGB3 and ITGAV:ITGB5. Interacts with ZDHHC22; the interaction may lead to CCN3 palmitoylation. May be palmitoylated on Cys-238, which is important for extracellular secretion. As to expression, widely expressed. Highly expressed in neurons of dorsal root ganglia and dorsal horn of the spinal cord (at protein level). Expressed in astrocytes (at protein level). In cartilage, dominantly expressed in the chondrocyte territorial matrix.

It localises to the secreted. The protein resides in the cytoplasm. Its subcellular location is the cell junction. It is found in the gap junction. In terms of biological role, immediate-early protein playing a role in various cellular processes including proliferation, adhesion, migration, differentiation and survival. Acts by binding to integrins or membrane receptors such as NOTCH1. Essential regulator of hematopoietic stem and progenitor cell function. Inhibits myogenic differentiation through the activation of Notch-signaling pathway. Inhibits vascular smooth muscle cells proliferation by increasing expression of cell-cycle regulators such as CDKN2B or CDKN1A independently of TGFB1 signaling. Ligand of integrins ITGAV:ITGB3 and ITGA5:ITGB1, acts directly upon endothelial cells to stimulate pro-angiogenic activities and induces angiogenesis. In endothelial cells, supports cell adhesion, induces directed cell migration (chemotaxis) and promotes cell survival. Also plays a role in cutaneous wound healing acting as integrin receptor ligand. Supports skin fibroblast adhesion through ITGA5:ITGB1 and ITGA6:ITGB1 and induces fibroblast chemotaxis through ITGAV:ITGB5. Seems to enhance bFGF-induced DNA synthesis in fibroblasts. Involved in bone regeneration as a negative regulator. Enhances the articular chondrocytic phenotype, whereas it repressed the one representing endochondral ossification. Impairs pancreatic beta-cell function, inhibits beta-cell proliferation and insulin secretion. Plays a role as negative regulator of endothelial pro-inflammatory activation reducing monocyte adhesion, its anti-inflammatory effects occur secondary to the inhibition of NF-kappaB signaling pathway. Contributes to the control and coordination of inflammatory processes in atherosclerosis. Attenuates inflammatory pain through regulation of IL1B- and TNF-induced MMP9, MMP2 and CCL2 expression. Inhibits MMP9 expression through ITGB1 engagement. Brain osteoanabolic hormone. During lactation, maintains the maternal skeleton and viability of offspring. The protein is CCN family member 3 (Ccn3) of Rattus norvegicus (Rat).